The following is a 165-amino-acid chain: Transmembrane protein 253 (165 aa).

Helical transmembrane passes span 31 to 51 (LVLA…AVSV), 60 to 80 (MTTA…IVTL), and 91 to 111 (LAGL…GVLV). A disordered region spans residues 145–165 (EEVPELETGPTVASTAKRTNQ). Polar residues predominate over residues 155-165 (TVASTAKRTNQ).

Its subcellular location is the membrane. The protein is Transmembrane protein 253 (TMEM253) of Bos taurus (Bovine).